Consider the following 317-residue polypeptide: Adenine deaminase (317 aa).

The Zn(2+) site is built by His-14, His-16, and His-194. Glu-197 acts as the Proton donor in catalysis. Asp-275 lines the Zn(2+) pocket. Residue Asp-276 participates in substrate binding.

This sequence belongs to the metallo-dependent hydrolases superfamily. Adenosine and AMP deaminases family. Adenine deaminase type 2 subfamily. Requires Zn(2+) as cofactor.

It catalyses the reaction adenine + H2O + H(+) = hypoxanthine + NH4(+). Functionally, catalyzes the hydrolytic deamination of adenine to hypoxanthine. Plays an important role in the purine salvage pathway and in nitrogen catabolism. The sequence is that of Adenine deaminase from Pseudomonas savastanoi pv. phaseolicola (strain 1448A / Race 6) (Pseudomonas syringae pv. phaseolicola (strain 1448A / Race 6)).